The primary structure comprises 435 residues: Methylenetetrahydrofolate--tRNA-(uracil-5-)-methyltransferase TrmFO (435 aa).

FAD is bound at residue 10 to 15 (GAGLAG).

Belongs to the MnmG family. TrmFO subfamily. FAD serves as cofactor.

The protein resides in the cytoplasm. The catalysed reaction is uridine(54) in tRNA + (6R)-5,10-methylene-5,6,7,8-tetrahydrofolate + NADH + H(+) = 5-methyluridine(54) in tRNA + (6S)-5,6,7,8-tetrahydrofolate + NAD(+). The enzyme catalyses uridine(54) in tRNA + (6R)-5,10-methylene-5,6,7,8-tetrahydrofolate + NADPH + H(+) = 5-methyluridine(54) in tRNA + (6S)-5,6,7,8-tetrahydrofolate + NADP(+). Catalyzes the folate-dependent formation of 5-methyl-uridine at position 54 (M-5-U54) in all tRNAs. The protein is Methylenetetrahydrofolate--tRNA-(uracil-5-)-methyltransferase TrmFO of Bacillus velezensis (strain DSM 23117 / BGSC 10A6 / LMG 26770 / FZB42) (Bacillus amyloliquefaciens subsp. plantarum).